A 196-amino-acid polypeptide reads, in one-letter code: CRISPR-associated exonuclease Cas4 (196 aa).

Position 23 (C23) interacts with [4Fe-4S] cluster. Mn(2+) contacts are provided by H50, D90, and E103. The [4Fe-4S] cluster site is built by C184, C187, and C193.

It belongs to the CRISPR-associated exonuclease Cas4 family. Mg(2+) is required as a cofactor. Requires [4Fe-4S] cluster as cofactor.

The catalysed reaction is exonucleolytic cleavage in the 5'- to 3'-direction to yield nucleoside 3'-phosphates.. Functionally, CRISPR (clustered regularly interspaced short palindromic repeat) is an adaptive immune system that provides protection against mobile genetic elements (viruses, transposable elements and conjugative plasmids). CRISPR clusters contain sequences complementary to antecedent mobile elements and target invading nucleic acids. CRISPR clusters are transcribed and processed into CRISPR RNA (crRNA). This may be a 5' to 3' ssDNA exonuclease. This Francisella tularensis subsp. novicida (strain U112) protein is CRISPR-associated exonuclease Cas4.